Here is a 126-residue protein sequence, read N- to C-terminus: 3-aminobutyryl-CoA ammonia lyase (126 aa).

It belongs to the KAL family. In terms of assembly, homohexamer.

It carries out the reaction (3S)-3-aminobutanoyl-CoA = (2E)-butenoyl-CoA + NH4(+). The protein operates within amino-acid degradation; L-lysine degradation via acetate pathway. Its function is as follows. Involved in the anaerobic fermentation of lysine. Catalyzes the deamination of L-3-aminobutyryl-CoA to produce crotonoyl-CoA. The polypeptide is 3-aminobutyryl-CoA ammonia lyase (Acetoanaerobium sticklandii (strain ATCC 12662 / DSM 519 / JCM 1433 / CCUG 9281 / NCIMB 10654 / HF) (Clostridium sticklandii)).